A 667-amino-acid polypeptide reads, in one-letter code: Bifunctional polymyxin resistance protein ArnA (667 aa).

Residues 1-304 (MKAIVFAYHD…EMGIVTDVRL (304 aa)) form a formyltransferase ArnAFT region. Residue histidine 104 is the Proton donor; for formyltransferase activity of the active site. (6R)-10-formyltetrahydrofolate is bound by residues arginine 114 and 136–140 (VKKAD). Residues 314–667 (RRTRVLILGV…TAAPKDELNA (354 aa)) are dehydrogenase ArnADH. NAD(+)-binding positions include aspartate 347 and 368 to 369 (DI). UDP-alpha-D-glucuronate contacts are provided by residues alanine 393, tyrosine 398, and 432–433 (TS). The active-site Proton acceptor; for decarboxylase activity is the glutamate 434. Residues arginine 460, asparagine 492, 526-535 (KLVDGGAQKR), and tyrosine 613 contribute to the UDP-alpha-D-glucuronate site. The active-site Proton donor; for decarboxylase activity is the arginine 619.

In the N-terminal section; belongs to the Fmt family. UDP-L-Ara4N formyltransferase subfamily. It in the C-terminal section; belongs to the NAD(P)-dependent epimerase/dehydratase family. UDP-glucuronic acid decarboxylase subfamily. In terms of assembly, homohexamer, formed by a dimer of trimers.

The catalysed reaction is UDP-alpha-D-glucuronate + NAD(+) = UDP-beta-L-threo-pentopyranos-4-ulose + CO2 + NADH. It carries out the reaction UDP-4-amino-4-deoxy-beta-L-arabinose + (6R)-10-formyltetrahydrofolate = UDP-4-deoxy-4-formamido-beta-L-arabinose + (6S)-5,6,7,8-tetrahydrofolate + H(+). It participates in nucleotide-sugar biosynthesis; UDP-4-deoxy-4-formamido-beta-L-arabinose biosynthesis; UDP-4-deoxy-4-formamido-beta-L-arabinose from UDP-alpha-D-glucuronate: step 1/3. It functions in the pathway nucleotide-sugar biosynthesis; UDP-4-deoxy-4-formamido-beta-L-arabinose biosynthesis; UDP-4-deoxy-4-formamido-beta-L-arabinose from UDP-alpha-D-glucuronate: step 3/3. Its pathway is bacterial outer membrane biogenesis; lipopolysaccharide biosynthesis. Functionally, bifunctional enzyme that catalyzes the oxidative decarboxylation of UDP-glucuronic acid (UDP-GlcUA) to UDP-4-keto-arabinose (UDP-Ara4O) and the addition of a formyl group to UDP-4-amino-4-deoxy-L-arabinose (UDP-L-Ara4N) to form UDP-L-4-formamido-arabinose (UDP-L-Ara4FN). The modified arabinose is attached to lipid A and is required for resistance to polymyxin and cationic antimicrobial peptides. The protein is Bifunctional polymyxin resistance protein ArnA of Yersinia pestis bv. Antiqua (strain Antiqua).